Reading from the N-terminus, the 341-residue chain is 2-keto-4-carboxy-3-hexenedioate hydratase (341 aa).

Residues histidine 8 and histidine 10 each coordinate Zn(2+). Residue 71-73 (RAS) coordinates substrate. Histidine 178 lines the Zn(2+) pocket. Substrate contacts are provided by tyrosine 194 and histidine 223. Glutamate 284 (proton donor/acceptor) is an active-site residue. Arginine 290 is a binding site for substrate.

This sequence belongs to the metallo-dependent hydrolases superfamily. As to quaternary structure, homodimer. It depends on Zn(2+) as a cofactor.

It carries out the reaction (3Z)-2-oxo-4-carboxy-3-hexenedioate + H2O = (2S)-2-hydroxy-4-oxobutane-1,2,4-tricarboxylate. It participates in secondary metabolite metabolism; lignin degradation. Functionally, contributes to the degradation of lignin at the level of the protocatechuate 4,5-cleavage pathway. Catalyzes the hydration of the double bond of (3Z)-2-keto-4-carboxy-3-hexenedioate (KCH) to (4S)-4-carboxy-4-hydroxy-2-oxoadipate (CHA, also named (2S)-2-hydroxy-4-oxobutane-1,2,4-tricarboxylate). Is involved in the catabolism of both vanillate and syringate. The protein is 2-keto-4-carboxy-3-hexenedioate hydratase of Sphingobium sp. (strain NBRC 103272 / SYK-6).